We begin with the raw amino-acid sequence, 431 residues long: Adenylosuccinate synthetase (431 aa).

Residues 12–18 (GDEGKGK) and 40–42 (GHT) contribute to the GTP site. Residue Asp13 is the Proton acceptor of the active site. Residues Asp13 and Gly40 each coordinate Mg(2+). Residues 13 to 16 (DEGK), 38 to 41 (NAGH), Thr129, Arg143, Gln224, Thr239, and Arg303 contribute to the IMP site. His41 functions as the Proton donor in the catalytic mechanism. Residue 299–305 (TVSNRQR) participates in substrate binding. Residues Arg305, 331 to 333 (KLD), and 413 to 415 (STG) each bind GTP.

Belongs to the adenylosuccinate synthetase family. Homodimer. The cofactor is Mg(2+).

Its subcellular location is the cytoplasm. It carries out the reaction IMP + L-aspartate + GTP = N(6)-(1,2-dicarboxyethyl)-AMP + GDP + phosphate + 2 H(+). The protein operates within purine metabolism; AMP biosynthesis via de novo pathway; AMP from IMP: step 1/2. Its function is as follows. Plays an important role in the de novo pathway of purine nucleotide biosynthesis. Catalyzes the first committed step in the biosynthesis of AMP from IMP. The protein is Adenylosuccinate synthetase of Ehrlichia canis (strain Jake).